The sequence spans 42 residues: Cytochrome b6-f complex subunit 7 (42 aa).

The chain crosses the membrane as a helical span at residues 19 to 37 (AVTCIFMTLFGLSLGFALL).

Belongs to the PetM family. As to quaternary structure, the 4 large subunits of the cytochrome b6-f complex are cytochrome b6, subunit IV (17 kDa polypeptide, PetD), cytochrome f and the Rieske protein, while the 4 small subunits are PetG, PetL, PetM and PetN. The complex functions as a dimer.

It is found in the plastid. It localises to the chloroplast thylakoid membrane. Functionally, component of the cytochrome b6-f complex, which mediates electron transfer between photosystem II (PSII) and photosystem I (PSI), cyclic electron flow around PSI, and state transitions. In Thalassiosira pseudonana (Marine diatom), this protein is Cytochrome b6-f complex subunit 7.